Consider the following 551-residue polypeptide: Meiotically up-regulated gene 184 protein (551 aa).

The 67-residue stretch at 12-78 folds into the J domain; that stretch reads DYYAILKLQK…TKRLIYDQLF (67 aa). Polar residues predominate over residues 85–122; the sequence is RSQYKPNSTSNPSKHTSAYASYNKGKNSKWSSPFASTT. 3 disordered regions span residues 85–153, 176–226, and 334–359; these read RSQY…FPRD, RQEP…SVYK, and EAES…TRNN. Over residues 124 to 133 the composition is skewed to basic and acidic residues; it reads KPQESSEKYS. The span at 134–146 shows a compositional bias: basic residues; that stretch reads KKSSTRKKEHFNK. Basic and acidic residues-rich tracts occupy residues 176 to 187 and 203 to 219; these read RQEPESLKKENN and GPKD…KIPE.

The protein resides in the cytoplasm. The protein localises to the cytoskeleton. Has a role in sporulation. This Schizosaccharomyces pombe (strain 972 / ATCC 24843) (Fission yeast) protein is Meiotically up-regulated gene 184 protein (mug184).